Here is a 223-residue protein sequence, read N- to C-terminus: Lipoprotein signal peptidase (223 aa).

The disordered stretch occupies residues 1-20 (MNSAKVNPSGHAPTPAPTAS). Transmembrane regions (helical) follow at residues 32-52 (LFFGLAIAGGALDLWSKEAIF), 65-85 (WIIEGYFGIETAVNIGAVFGL), 91-111 (LVFAAISVFAAAAIIAWLFFF), and 116-136 (SCWLTFALGCITGGIIGNLYD). Catalysis depends on residues aspartate 156 and aspartate 175. The helical transmembrane segment at 173 to 193 (IADSLLVTGAIMLLVQSFFFP) threads the bilayer. Residues 196–223 (PHGEADGNELPGRRAPDEPTEGTKPAAS) are disordered.

The protein belongs to the peptidase A8 family.

It is found in the cell inner membrane. The enzyme catalyses Release of signal peptides from bacterial membrane prolipoproteins. Hydrolyzes -Xaa-Yaa-Zaa-|-(S,diacylglyceryl)Cys-, in which Xaa is hydrophobic (preferably Leu), and Yaa (Ala or Ser) and Zaa (Gly or Ala) have small, neutral side chains.. It functions in the pathway protein modification; lipoprotein biosynthesis (signal peptide cleavage). Functionally, this protein specifically catalyzes the removal of signal peptides from prolipoproteins. This Rhodopirellula baltica (strain DSM 10527 / NCIMB 13988 / SH1) protein is Lipoprotein signal peptidase.